The sequence spans 428 residues: Histidine--tRNA ligase (428 aa).

This sequence belongs to the class-II aminoacyl-tRNA synthetase family. Homodimer.

It is found in the cytoplasm. The enzyme catalyses tRNA(His) + L-histidine + ATP = L-histidyl-tRNA(His) + AMP + diphosphate + H(+). The polypeptide is Histidine--tRNA ligase (Pseudomonas entomophila (strain L48)).